A 153-amino-acid polypeptide reads, in one-letter code: Superoxide dismutase [Cu-Zn] (153 aa).

3 residues coordinate Cu cation: H45, H47, and H62. C56 and C145 form a disulfide bridge. The Zn(2+) site is built by H62, H70, H79, and D82. Residue H119 participates in Cu cation binding.

This sequence belongs to the Cu-Zn superoxide dismutase family. Homodimer. Requires Cu cation as cofactor. Zn(2+) serves as cofactor.

It localises to the cytoplasm. It catalyses the reaction 2 superoxide + 2 H(+) = H2O2 + O2. In terms of biological role, destroys radicals which are normally produced within the cells and which are toxic to biological systems. The protein is Superoxide dismutase [Cu-Zn] of Ceratitis capitata (Mediterranean fruit fly).